The sequence spans 155 residues: 6,7-dimethyl-8-ribityllumazine synthase (155 aa).

Residues Phe23, 57-59 (AFE), and 81-83 (AVI) contribute to the 5-amino-6-(D-ribitylamino)uracil site. 86 to 87 (ST) is a binding site for (2S)-2-hydroxy-3-oxobutyl phosphate. Residue His89 is the Proton donor of the active site. Phe114 contacts 5-amino-6-(D-ribitylamino)uracil. A (2S)-2-hydroxy-3-oxobutyl phosphate-binding site is contributed by Arg128.

Belongs to the DMRL synthase family.

It catalyses the reaction (2S)-2-hydroxy-3-oxobutyl phosphate + 5-amino-6-(D-ribitylamino)uracil = 6,7-dimethyl-8-(1-D-ribityl)lumazine + phosphate + 2 H2O + H(+). It functions in the pathway cofactor biosynthesis; riboflavin biosynthesis; riboflavin from 2-hydroxy-3-oxobutyl phosphate and 5-amino-6-(D-ribitylamino)uracil: step 1/2. Catalyzes the formation of 6,7-dimethyl-8-ribityllumazine by condensation of 5-amino-6-(D-ribitylamino)uracil with 3,4-dihydroxy-2-butanone 4-phosphate. This is the penultimate step in the biosynthesis of riboflavin. The chain is 6,7-dimethyl-8-ribityllumazine synthase from Dehalococcoides mccartyi (strain ATCC BAA-2266 / KCTC 15142 / 195) (Dehalococcoides ethenogenes (strain 195)).